The chain runs to 480 residues: Probable GH family 25 lysozyme 3 (480 aa).

Residues 1–20 (MNKLILSILSVLLIVSIASA) form the signal peptide. The region spanning 21–231 (GNGIDISSGT…STTSSSATSS (211 aa)) is the Ch-type lysozyme domain. Residues aspartate 25, aspartate 114, and glutamate 116 contribute to the active site. Residues 219-472 (SGSSTTSSSA…SSGSGNYTSG (254 aa)) are compositionally biased toward low complexity. The segment at 219–480 (SGSSTTSSSA…SGSGNGAFLF (262 aa)) is disordered. N-linked (GlcNAc...) asparagine glycans are attached at residues asparagine 423, asparagine 428, asparagine 437, asparagine 446, and asparagine 468.

This sequence belongs to the glycosyl hydrolase 25 family.

It localises to the secreted. The catalysed reaction is Hydrolysis of (1-&gt;4)-beta-linkages between N-acetylmuramic acid and N-acetyl-D-glucosamine residues in a peptidoglycan and between N-acetyl-D-glucosamine residues in chitodextrins.. The protein is Probable GH family 25 lysozyme 3 of Dictyostelium discoideum (Social amoeba).